Consider the following 323-residue polypeptide: Acetyl esterase (323 aa).

The short motif at 91–93 (HGG) is the Involved in the stabilization of the negatively charged intermediate by the formation of the oxyanion hole element. Active-site residues include Ser-165, Asp-262, and His-292.

This sequence belongs to the 'GDXG' lipolytic enzyme family. Homodimer. Interacts with MalT and MelA.

It is found in the cytoplasm. Displays esterase activity towards short chain fatty esters (acyl chain length of up to 8 carbons). Able to hydrolyze triacetylglycerol (triacetin) and tributyrylglycerol (tributyrin), but not trioleylglycerol (triolein) or cholesterol oleate. Negatively regulates MalT activity by antagonizing maltotriose binding. Inhibits MelA galactosidase activity. The sequence is that of Acetyl esterase from Salmonella paratyphi B (strain ATCC BAA-1250 / SPB7).